The primary structure comprises 428 residues: UDP-N-acetylglucosamine 1-carboxyvinyltransferase 2 (428 aa).

22–23 contacts phosphoenolpyruvate; that stretch reads KN. Position 92 (Arg-92) interacts with UDP-N-acetyl-alpha-D-glucosamine. Cys-116 (proton donor) is an active-site residue. Cys-116 is subject to 2-(S-cysteinyl)pyruvic acid O-phosphothioketal. UDP-N-acetyl-alpha-D-glucosamine is bound by residues 121–125, Asp-304, and Ile-326; that span reads RPIDQ.

The protein belongs to the EPSP synthase family. MurA subfamily.

The protein resides in the cytoplasm. It carries out the reaction phosphoenolpyruvate + UDP-N-acetyl-alpha-D-glucosamine = UDP-N-acetyl-3-O-(1-carboxyvinyl)-alpha-D-glucosamine + phosphate. The protein operates within cell wall biogenesis; peptidoglycan biosynthesis. Functionally, cell wall formation. Adds enolpyruvyl to UDP-N-acetylglucosamine. This chain is UDP-N-acetylglucosamine 1-carboxyvinyltransferase 2, found in Shouchella clausii (strain KSM-K16) (Alkalihalobacillus clausii).